A 201-amino-acid chain; its full sequence is Imidazole glycerol phosphate synthase subunit HisH (201 aa).

Residues 1–201 (MVFIADYGAG…LQVLKNFAEF (201 aa)) enclose the Glutamine amidotransferase type-1 domain. The active-site Nucleophile is the Cys-79. Catalysis depends on residues His-183 and Glu-185.

In terms of assembly, heterodimer of HisH and HisF.

It localises to the cytoplasm. It carries out the reaction 5-[(5-phospho-1-deoxy-D-ribulos-1-ylimino)methylamino]-1-(5-phospho-beta-D-ribosyl)imidazole-4-carboxamide + L-glutamine = D-erythro-1-(imidazol-4-yl)glycerol 3-phosphate + 5-amino-1-(5-phospho-beta-D-ribosyl)imidazole-4-carboxamide + L-glutamate + H(+). The enzyme catalyses L-glutamine + H2O = L-glutamate + NH4(+). It functions in the pathway amino-acid biosynthesis; L-histidine biosynthesis; L-histidine from 5-phospho-alpha-D-ribose 1-diphosphate: step 5/9. In terms of biological role, IGPS catalyzes the conversion of PRFAR and glutamine to IGP, AICAR and glutamate. The HisH subunit catalyzes the hydrolysis of glutamine to glutamate and ammonia as part of the synthesis of IGP and AICAR. The resulting ammonia molecule is channeled to the active site of HisF. The polypeptide is Imidazole glycerol phosphate synthase subunit HisH (Chlorobaculum tepidum (strain ATCC 49652 / DSM 12025 / NBRC 103806 / TLS) (Chlorobium tepidum)).